The following is a 414-amino-acid chain: Zinc metalloproteinase nas-26 (414 aa).

The N-terminal stretch at 1 to 20 (MTSSLVLILAPLALVAIGEA) is a signal peptide. Positions 21 to 61 (AFGNSSKIFEIPGLEVMASDKYPHFTTIETVSRTKVHRHRR) are excised as a propeptide. A glycan (N-linked (GlcNAc...) asparagine) is linked at Asn-24. Residues 62–264 (EVIAGQIYDW…AKVINDIYCP (203 aa)) form the Peptidase M12A domain. Disulfide bonds link Cys-103/Cys-263, Cys-126/Cys-146, Cys-267/Cys-286, Cys-289/Cys-300, Cys-308/Cys-331, and Cys-358/Cys-378. His-154 contributes to the Zn(2+) binding site. The active site involves Glu-155. Residues His-158 and His-164 each contribute to the Zn(2+) site. Positions 251-307 (AFLDAKVINDIYCPNACQGRNHLNCLAGGYPDPNNCNVCRCPEGLGGPDCGRLQPSP) constitute an EGF-like domain. The region spanning 308–414 (CGGEIHASDQ…RFSLRFRRQA (107 aa)) is the CUB domain.

The cofactor is Zn(2+).

The protein localises to the secreted. Metalloprotease. The chain is Zinc metalloproteinase nas-26 (toh-1) from Caenorhabditis elegans.